The following is a 565-amino-acid chain: MGDKARRKWLVLAAWPYAYGVPHLGNLIGSVLSADVAARFLRLAGDEVVFVSGSDMHGTPIEVEALKRGESPKDLAERNHEKIKELFERWEISFDNYSKTESPTHIKFVQDFYRRVYENGYVFSDTVQLYYCPKDKIFLPDRYIVGTCPYCGYDRAYGDQCENCGRLLEPTLLLNPRCAICGSTPELRTTTHWFFDLPKLTDALKRYIEENENLPPNARNMSLQILRDGLKPRALTRDNKWGIPAPFPGAEDKTIYVWMEAVLGYISATIEYFASKGEPEKWKEFWLDPETRSVYFIGKDNIPFHTLILPALLIASGEKYVLPWTVASTEYLLFRGLKFSKSRRIGVWIDEALEVFPADYWRFVLVSLRPEQKDMSFTWEEFLRIVNNDLNDNIGNFVHRVLVLVQRKFGGIAPAPLDFADEDLKFREEILARSREVAEFMYAFRFKEALTHILWLSSSGNSYLNFRKPWELDSESARTPAFLALHAVKALAIMLYPIIPRSSQEMWKLLGYKDDIANHRWHEINEAVPPGQELPSPRPLFRKISEEELKAAVEKIEELRASRSS.

The 'HIGH' region signature appears at 16 to 26 (PYAYGVPHLGN). 4 residues coordinate Zn(2+): Cys-148, Cys-151, Cys-161, and Cys-164. Residues 338 to 342 (KFSKS) carry the 'KMSKS' region motif. Lys-341 contributes to the ATP binding site.

Belongs to the class-I aminoacyl-tRNA synthetase family. MetG type 1 subfamily. Requires Zn(2+) as cofactor.

The protein localises to the cytoplasm. The catalysed reaction is tRNA(Met) + L-methionine + ATP = L-methionyl-tRNA(Met) + AMP + diphosphate. Is required not only for elongation of protein synthesis but also for the initiation of all mRNA translation through initiator tRNA(fMet) aminoacylation. This chain is Methionine--tRNA ligase, found in Thermofilum pendens (strain DSM 2475 / Hrk 5).